Consider the following 201-residue polypeptide: Ribonuclease HII (201 aa).

An RNase H type-2 domain is found at 12–201 (DLVAGVDEVG…VRELLDVPVQ (190 aa)). The a divalent metal cation site is built by Asp18, Glu19, and Asp110.

It belongs to the RNase HII family. Requires Mn(2+) as cofactor. Mg(2+) is required as a cofactor.

The protein localises to the cytoplasm. The catalysed reaction is Endonucleolytic cleavage to 5'-phosphomonoester.. Endonuclease that specifically degrades the RNA of RNA-DNA hybrids. This Pseudomonas aeruginosa (strain UCBPP-PA14) protein is Ribonuclease HII.